Consider the following 496-residue polypeptide: Lysine--tRNA ligase (496 aa).

Positions 409 and 416 each coordinate Mg(2+).

It belongs to the class-II aminoacyl-tRNA synthetase family. Homodimer. It depends on Mg(2+) as a cofactor.

The protein resides in the cytoplasm. It catalyses the reaction tRNA(Lys) + L-lysine + ATP = L-lysyl-tRNA(Lys) + AMP + diphosphate. In Streptococcus thermophilus (strain ATCC BAA-491 / LMD-9), this protein is Lysine--tRNA ligase.